A 598-amino-acid polypeptide reads, in one-letter code: Fumarate reductase flavoprotein subunit (598 aa).

FAD contacts are provided by residues 12-16, 36-38, 44-52, 156-158, and Asp212; these read GAGGA, ISK, SHTVAAEGG, and HFV. His45 carries the post-translational modification Tele-8alpha-FAD histidine. Catalysis depends on residues His233 and Arg249. FAD-binding positions include 356–357, Glu380, and 391–397; these read HY and RLGSNSL. Residues 577–598 are disordered; that stretch reads AKRVYGGEADAQEKSDKEQANG. Residues 587 to 598 are compositionally biased toward basic and acidic residues; sequence AQEKSDKEQANG.

Belongs to the FAD-dependent oxidoreductase 2 family. FRD/SDH subfamily. Part of an enzyme complex containing four subunits: a flavoprotein (FrdA), an iron-sulfur protein (FrdB), and two hydrophobic anchor proteins (FrdC and FrdD). Interacts with SdhE. Requires FAD as cofactor.

It localises to the cell inner membrane. It carries out the reaction a quinone + succinate = fumarate + a quinol. It catalyses the reaction a menaquinone + succinate = a menaquinol + fumarate. Functionally, two distinct, membrane-bound, FAD-containing enzymes are responsible for the catalysis of fumarate and succinate interconversion; the fumarate reductase is used in anaerobic growth, and the succinate dehydrogenase is used in aerobic growth. In Serratia sp. (strain ATCC 39006) (Prodigiosinella confusarubida), this protein is Fumarate reductase flavoprotein subunit.